The following is a 504-amino-acid chain: Probable ergothioneine transporter EgtUBC (504 aa).

The ABC transmembrane type-1 domain occupies 19–198 (MIEHIQISFI…LLAIIFDLIL (180 aa)). 6 helical membrane passes run 25–45 (ISFI…ILLT), 49–69 (TISE…SLAL), 70–90 (LGLM…ALVV), 145–165 (AMVL…GGLG), 178–198 (SLIL…DLIL), and 209–229 (LLMT…IPMF). The ergothioneine binding domain stretch occupies residues 231–504 (QKGDKITLAG…DYLKAKGLIK (274 aa)).

This sequence in the N-terminal section; belongs to the binding-protein-dependent transport system permease family. It in the C-terminal section; belongs to the OsmX family. As to quaternary structure, the complex is probably composed of at least an ATP-binding protein (EgtUA) and a transmembrane protein (EgtUBC).

It localises to the membrane. Part of an ABC transporter complex EgtU required for the uptake of ergothioneine (EGT), a natural low-molecular weight (LMW) thiol antioxidant. Responsible for the translocation of the substrate across the membrane. Also contains a C-terminal periplasmic solute-binding domain (SBD) which binds to EGT with sub-micromolar affinity. Probably does not bind L-hercynine. This Staphylococcus aureus (strain USA300) protein is Probable ergothioneine transporter EgtUBC (egtUBC).